A 485-amino-acid polypeptide reads, in one-letter code: Glutamyl-tRNA(Gln) amidotransferase subunit A (485 aa).

Active-site charge relay system residues include lysine 78 and serine 153. Serine 177 serves as the catalytic Acyl-ester intermediate.

Belongs to the amidase family. GatA subfamily. As to quaternary structure, heterotrimer of A, B and C subunits.

The enzyme catalyses L-glutamyl-tRNA(Gln) + L-glutamine + ATP + H2O = L-glutaminyl-tRNA(Gln) + L-glutamate + ADP + phosphate + H(+). Its function is as follows. Allows the formation of correctly charged Gln-tRNA(Gln) through the transamidation of misacylated Glu-tRNA(Gln) in organisms which lack glutaminyl-tRNA synthetase. The reaction takes place in the presence of glutamine and ATP through an activated gamma-phospho-Glu-tRNA(Gln). The chain is Glutamyl-tRNA(Gln) amidotransferase subunit A from Bacillus mycoides (strain KBAB4) (Bacillus weihenstephanensis).